The primary structure comprises 206 residues: Small ribosomal subunit protein uS4 (206 aa).

The 58-residue stretch at 98–155 folds into the S4 RNA-binding domain; sequence TRLDNVVYRLGWALSRDQARQLVSHGKIAVNGKRVNIPSYNLKPGDVVELLDKDLIPV.

Belongs to the universal ribosomal protein uS4 family. Part of the 30S ribosomal subunit. Contacts protein S5. The interaction surface between S4 and S5 is involved in control of translational fidelity.

One of the primary rRNA binding proteins, it binds directly to 16S rRNA where it nucleates assembly of the body of the 30S subunit. Functionally, with S5 and S12 plays an important role in translational accuracy. In Dictyoglomus thermophilum (strain ATCC 35947 / DSM 3960 / H-6-12), this protein is Small ribosomal subunit protein uS4.